A 453-amino-acid chain; its full sequence is Kynurenine 3-monooxygenase (453 aa).

It belongs to the aromatic-ring hydroxylase family. KMO subfamily. FAD is required as a cofactor.

It carries out the reaction L-kynurenine + NADPH + O2 + H(+) = 3-hydroxy-L-kynurenine + NADP(+) + H2O. Its pathway is cofactor biosynthesis; NAD(+) biosynthesis; quinolinate from L-kynurenine: step 1/3. Functionally, catalyzes the hydroxylation of L-kynurenine (L-Kyn) to form 3-hydroxy-L-kynurenine (L-3OHKyn). Required for synthesis of quinolinic acid. The polypeptide is Kynurenine 3-monooxygenase (Salinispora tropica (strain ATCC BAA-916 / DSM 44818 / JCM 13857 / NBRC 105044 / CNB-440)).